The sequence spans 316 residues: uncharacterized protein (316 aa).

This is an uncharacterized protein from Caenorhabditis elegans.